Reading from the N-terminus, the 202-residue chain is Recoverin (202 aa).

Gly-2 carries N-myristoyl glycine lipidation. EF-hand domains lie at 24 to 59 (TEEELSSWYQSFLKECPSGRITRQEFQTIYSKFFPE), 61 to 96 (DPKAYAQHVFRSFDANSDGTLDFKEYVIALHMTSAG), 97 to 132 (KTNQKLEWAFSLYDVDGNGTISKNEVLEIVTAIFKM), and 147 to 182 (TPEKRAEKIWGFFGKKDDDKLTEKEFIEGTLANKEI). Cysteine sulfenic acid (-SOH) is present on Cys-39. Asp-74, Asn-76, Asp-78, Thr-80, Glu-85, Asp-110, Asp-112, Asn-114, Thr-116, and Glu-121 together coordinate Ca(2+). Residues 189–192 (EPQK) form an interaction with GRK1 region. The interval 191–202 (QKVKEKLKEKKL) is modulates EF-hand 3 domain calcium binding affinity.

Belongs to the recoverin family. In terms of assembly, homodimer; disulfide-linked. Homodimerization is caused by prolonged intense illumination. May form a complex composed of RHO, GRK1 and RCVRN in a Ca(2+)-dependent manner; RCVRN prevents the interaction between GRK1 and RHO. Interacts (via C-terminus) with GRK1 (via N-terminus); the interaction is Ca(2+)-dependent. Post-translationally, the N-terminal glycine is linked to one of four different types of acyl groups. The most abundant is myristoleate (14:1), but 14:0, 14:2, and 12:0 acyl residues are also present. The Ca(2+) induced exposure of the myristoyl group, known as the calcium-myristoyl switch, promotes RCVRN binding to the photoreceptor cell membranes only when intracellular Ca(2+) concentration is high. In terms of processing, oxidation on Cys-39 occurs in response to prolonged intense illumination and results in the formation of disulfide homodimers, and to a lesser extent disulfide-linked heterodimers. As to expression, expressed in the retina (at protein level). Expressed in the pineal gland (at protein level).

The protein localises to the photoreceptor inner segment. Its subcellular location is the cell projection. It is found in the cilium. The protein resides in the photoreceptor outer segment. It localises to the photoreceptor outer segment membrane. The protein localises to the perikaryon. Its function is as follows. Acts as a calcium sensor and regulates phototransduction of cone and rod photoreceptor cells. Modulates light sensitivity of cone photoreceptor in dark and dim conditions. In response to high Ca(2+) levels induced by low light levels, prolongs RHO/rhodopsin activation in rod photoreceptor cells by binding to and inhibiting GRK1-mediated phosphorylation of RHO/rhodopsin. Plays a role in scotopic vision/enhances vision in dim light by enhancing signal transfer between rod photoreceptors and rod bipolar cells. Improves rod photoreceptor sensitivity in dim light and mediates response of rod photoreceptors to facilitate detection of change and motion in bright light. The chain is Recoverin (RCVRN) from Bos taurus (Bovine).